Reading from the N-terminus, the 207-residue chain is MKLRGLYAITDSQLLAGRFLSHVEAALEGGVCLLQYRDKSDDAARRLREAEGLMKLCERYGTQLLINDDAELAARLGVGVHLGQTDGPLTPARALLGRQAIIGSTCHASLELAAQAASEGASYVAFGRFFNSVTKPGAPAANVGLLEQARAQVKLPIAVIGGITLDNAAPLVAHGADLLAVIHGLFGADSAQEVTRRARAFNALFAS.

Residues 35–39 (QYRDK) and Asn67 contribute to the 4-amino-2-methyl-5-(diphosphooxymethyl)pyrimidine site. Positions 68 and 86 each coordinate Mg(2+). Thr105 contacts 4-amino-2-methyl-5-(diphosphooxymethyl)pyrimidine. 132–134 (SVT) provides a ligand contact to 2-[(2R,5Z)-2-carboxy-4-methylthiazol-5(2H)-ylidene]ethyl phosphate. A 4-amino-2-methyl-5-(diphosphooxymethyl)pyrimidine-binding site is contributed by Lys135. Gly162 is a 2-[(2R,5Z)-2-carboxy-4-methylthiazol-5(2H)-ylidene]ethyl phosphate binding site.

This sequence belongs to the thiamine-phosphate synthase family. It depends on Mg(2+) as a cofactor.

It catalyses the reaction 2-[(2R,5Z)-2-carboxy-4-methylthiazol-5(2H)-ylidene]ethyl phosphate + 4-amino-2-methyl-5-(diphosphooxymethyl)pyrimidine + 2 H(+) = thiamine phosphate + CO2 + diphosphate. The catalysed reaction is 2-(2-carboxy-4-methylthiazol-5-yl)ethyl phosphate + 4-amino-2-methyl-5-(diphosphooxymethyl)pyrimidine + 2 H(+) = thiamine phosphate + CO2 + diphosphate. The enzyme catalyses 4-methyl-5-(2-phosphooxyethyl)-thiazole + 4-amino-2-methyl-5-(diphosphooxymethyl)pyrimidine + H(+) = thiamine phosphate + diphosphate. It participates in cofactor biosynthesis; thiamine diphosphate biosynthesis; thiamine phosphate from 4-amino-2-methyl-5-diphosphomethylpyrimidine and 4-methyl-5-(2-phosphoethyl)-thiazole: step 1/1. In terms of biological role, condenses 4-methyl-5-(beta-hydroxyethyl)thiazole monophosphate (THZ-P) and 2-methyl-4-amino-5-hydroxymethyl pyrimidine pyrophosphate (HMP-PP) to form thiamine monophosphate (TMP). The chain is Thiamine-phosphate synthase from Pseudomonas putida (strain ATCC 700007 / DSM 6899 / JCM 31910 / BCRC 17059 / LMG 24140 / F1).